Consider the following 440-residue polypeptide: Chitinase-like protein Idgf2 (440 aa).

Positions 1-20 are cleaved as a signal peptide; that stretch reads MKAWIWFTFVACLFAASTEA. In terms of domain architecture, GH18 spans 22 to 440; sequence SNLVCYYDSS…PILRAIKYRL (419 aa). Cysteine 26 and cysteine 53 form a disulfide bridge. The N-linked (GlcNAc...) asparagine glycan is linked to asparagine 220. Cysteine 342 and cysteine 425 are disulfide-bonded.

It belongs to the glycosyl hydrolase 18 family. IDGF subfamily. In terms of processing, glycosylated. As to expression, primarily expressed in yolk cells and fat body. In larvae, it is expressed in the imaginal ring and weakly expressed in imaginal disks. More strongly expressed than Idgf1 and Idgf3.

It is found in the secreted. In terms of biological role, cooperates with insulin-like peptides to stimulate the proliferation, polarization and motility of imaginal disk cells. May act by stabilizing the binding of insulin-like peptides to its receptor through a simultaneous interaction with both molecules to form a multiprotein signaling complex. The chain is Chitinase-like protein Idgf2 (Idgf2) from Drosophila melanogaster (Fruit fly).